The sequence spans 121 residues: Cell division protein FtsL (121 aa).

Over 1–34 (MISRVTEALSKVKGSIGSNERHALPGVIGDDLLR) the chain is Cytoplasmic. A helical membrane pass occupies residues 35–57 (FGKLPLCLFICIILTAVTVVTTA). Residues 58 to 121 (HHTRLLTAQR…PSQENIVVQK (64 aa)) lie on the Periplasmic side of the membrane.

The protein belongs to the FtsL family. In terms of assembly, part of a complex composed of FtsB, FtsL and FtsQ.

It is found in the cell inner membrane. Its function is as follows. Essential cell division protein. May link together the upstream cell division proteins, which are predominantly cytoplasmic, with the downstream cell division proteins, which are predominantly periplasmic. The protein is Cell division protein FtsL of Salmonella typhimurium (strain LT2 / SGSC1412 / ATCC 700720).